Consider the following 60-residue polypeptide: Sperm protamine P1 (60 aa).

The disordered stretch occupies residues 1–60; the sequence is MARYRHSRSRSRSRYRRRRRRRSRYRSRRRRXRRRRRSRRGRRRRGYSRRRYSRRRRRRY.

It belongs to the protamine P1 family. In terms of tissue distribution, testis.

Its subcellular location is the nucleus. It is found in the chromosome. In terms of biological role, protamines substitute for histones in the chromatin of sperm during the haploid phase of spermatogenesis. They compact sperm DNA into a highly condensed, stable and inactive complex. The protein is Sperm protamine P1 (PRM1) of Petrogale concinna (Nabarlek).